The sequence spans 104 residues: Putative pterin-4-alpha-carbinolamine dehydratase (104 aa).

Belongs to the pterin-4-alpha-carbinolamine dehydratase family.

It catalyses the reaction (4aS,6R)-4a-hydroxy-L-erythro-5,6,7,8-tetrahydrobiopterin = (6R)-L-erythro-6,7-dihydrobiopterin + H2O. In Rhizobium meliloti (strain 1021) (Ensifer meliloti), this protein is Putative pterin-4-alpha-carbinolamine dehydratase (pcbD).